Here is a 538-residue protein sequence, read N- to C-terminus: Chaperonin GroEL 1 (538 aa).

ATP is bound by residues Thr-29 to Pro-32, Asp-86 to Thr-90, Gly-413, and Asp-494.

This sequence belongs to the chaperonin (HSP60) family. Forms a cylinder of 14 subunits composed of two heptameric rings stacked back-to-back. Interacts with the co-chaperonin GroES.

The protein resides in the cytoplasm. It carries out the reaction ATP + H2O + a folded polypeptide = ADP + phosphate + an unfolded polypeptide.. In terms of biological role, together with its co-chaperonin GroES, plays an essential role in assisting protein folding. The GroEL-GroES system forms a nano-cage that allows encapsulation of the non-native substrate proteins and provides a physical environment optimized to promote and accelerate protein folding. In Mycobacterium avium (strain 104), this protein is Chaperonin GroEL 1.